Reading from the N-terminus, the 158-residue chain is Cyclic pyranopterin monophosphate synthase (158 aa).

Substrate is bound by residues 75-77 and 113-114; these read LCH and ME. Asp128 is a catalytic residue.

Belongs to the MoaC family. Homohexamer; trimer of dimers.

The catalysed reaction is (8S)-3',8-cyclo-7,8-dihydroguanosine 5'-triphosphate = cyclic pyranopterin phosphate + diphosphate. It participates in cofactor biosynthesis; molybdopterin biosynthesis. Functionally, catalyzes the conversion of (8S)-3',8-cyclo-7,8-dihydroguanosine 5'-triphosphate to cyclic pyranopterin monophosphate (cPMP). The protein is Cyclic pyranopterin monophosphate synthase of Paraburkholderia xenovorans (strain LB400).